The following is a 210-amino-acid chain: Cytochrome c biogenesis ATP-binding export protein CcmA (210 aa).

Residues 1–208 (MHLNQLVISH…KVRTLSLDQF (208 aa)) enclose the ABC transporter domain. 38-45 (GHNGIGKT) is a binding site for ATP.

This sequence belongs to the ABC transporter superfamily. CcmA exporter (TC 3.A.1.107) family. In terms of assembly, the complex is composed of two ATP-binding proteins (CcmA) and two transmembrane proteins (CcmB).

It is found in the cell inner membrane. The catalysed reaction is heme b(in) + ATP + H2O = heme b(out) + ADP + phosphate + H(+). In terms of biological role, part of the ABC transporter complex CcmAB involved in the biogenesis of c-type cytochromes; once thought to export heme, this seems not to be the case, but its exact role is uncertain. Responsible for energy coupling to the transport system. The chain is Cytochrome c biogenesis ATP-binding export protein CcmA from Haemophilus ducreyi (strain 35000HP / ATCC 700724).